A 578-amino-acid polypeptide reads, in one-letter code: Zinc finger protein 248 (578 aa).

Residues 8-78 (VSFKDVCVDF…LEKGFPSQDP (71 aa)) form the KRAB domain. Residues 239–263 (TVCKYNECGRTFIESLKLNISQRPH) form a C2H2-type 1; degenerate zinc finger. Lys-340 is covalently cross-linked (Glycyl lysine isopeptide (Lys-Gly) (interchain with G-Cter in SUMO2)). 7 consecutive C2H2-type zinc fingers follow at residues 379-401 (FECG…QRTH), 407-429 (YECT…QRTH), 435-457 (YECK…QRTH), 463-485 (YECN…QRTH), 491-513 (FICN…QRTH), 519-542 (YKCN…RTHT), and 547-569 (YECN…QRIH).

Belongs to the krueppel C2H2-type zinc-finger protein family.

Its subcellular location is the nucleus. Its function is as follows. May be involved in transcriptional regulation. This Pongo abelii (Sumatran orangutan) protein is Zinc finger protein 248 (ZNF248).